Here is a 411-residue protein sequence, read N- to C-terminus: uncharacterized protein (411 aa).

The UmuC domain maps to 20-199 (FLYFDFDAFF…LPITEIPGIG (180 aa)).

It belongs to the DNA polymerase type-Y family.

This is an uncharacterized protein from Mycoplasma genitalium (strain ATCC 33530 / DSM 19775 / NCTC 10195 / G37) (Mycoplasmoides genitalium).